Reading from the N-terminus, the 320-residue chain is Pyrroline-5-carboxylate reductase 2 (320 aa).

Position 2 is an N-acetylserine (Ser-2). NADP(+) contacts are provided by residues 6-11 and Ser-34; that span reads IGAGQL. 9 residues coordinate NADPH: Ala-8, Gln-10, Leu-11, Ser-34, Glu-36, Asn-56, Val-70, Lys-71, and Ala-97. NADP(+)-binding positions include Asn-56, 69–72, and 95–97; these read AVKP and CAA. L-proline is bound at residue Glu-164. An NADPH-binding site is contributed by Asn-230. Residues Ala-237 and Thr-238 each coordinate L-proline. The segment covering 296–305 has biased composition (low complexity); that stretch reads TVSTLTPSSP. The interval 296–320 is disordered; it reads TVSTLTPSSPGKLLTRSLALGGKKD. Ser-304 carries the phosphoserine modification.

The protein belongs to the pyrroline-5-carboxylate reductase family. As to quaternary structure, homodecamer; composed of 5 homodimers. Interacts with LTO1.

Its subcellular location is the cytoplasm. The protein resides in the mitochondrion. The catalysed reaction is L-proline + NADP(+) = (S)-1-pyrroline-5-carboxylate + NADPH + 2 H(+). It catalyses the reaction L-proline + NAD(+) = (S)-1-pyrroline-5-carboxylate + NADH + 2 H(+). The protein operates within amino-acid biosynthesis; L-proline biosynthesis; L-proline from L-glutamate 5-semialdehyde: step 1/1. In terms of biological role, oxidoreductase that catalyzes the last step in proline biosynthesis, which corresponds to the reduction of pyrroline-5-carboxylate to L-proline using NAD(P)H. At physiologic concentrations, has higher specific activity in the presence of NADH. Involved in cellular response to oxidative stress. In some cell types, such as erythrocytes, its primary function may be the generation of NADP(+). The polypeptide is Pyrroline-5-carboxylate reductase 2 (PYCR2) (Pongo abelii (Sumatran orangutan)).